The following is a 932-amino-acid chain: Ribosome biogenesis protein ERB1 (932 aa).

Residues 1–18 (MVRPSSSSSASASAARSG) are compositionally biased toward low complexity. Residues 1–229 (MVRPSSSSSA…RSQAAQAFDL (229 aa)) form a disordered region. The segment covering 27–36 (PTATNPTTRA) has biased composition (polar residues). Acidic residues-rich tracts occupy residues 57 to 119 (VSDD…EVDS) and 150 to 172 (DNSD…DEDE). Over residues 175–184 (SAFAARSDAS) the composition is skewed to low complexity. WD repeat units lie at residues 555-594 (PDGG…CTAS) and 604-644 (AERS…NYAK). A disordered region spans residues 679 to 698 (SMPSKPDARSPVAWTRPSEA). 4 WD repeats span residues 762-800 (SKGS…LIKT), 803-842 (SGFK…RPYK), 846-885 (YHAR…DYGE), and 901-932 (KNGL…LWTT).

The protein belongs to the WD repeat BOP1/ERB1 family. Component of the NOP7 complex, composed of ERB1, NOP7 and YTM1. The complex is held together by ERB1, which interacts with NOP7 via its N-terminal domain and with YTM1 via a high-affinity interaction between the seven-bladed beta-propeller domains of the 2 proteins. The NOP7 complex associates with the 66S pre-ribosome.

Its subcellular location is the nucleus. The protein localises to the nucleolus. It localises to the nucleoplasm. Functionally, component of the NOP7 complex, which is required for maturation of the 25S and 5.8S ribosomal RNAs and formation of the 60S ribosome. The chain is Ribosome biogenesis protein ERB1 from Mycosarcoma maydis (Corn smut fungus).